The primary structure comprises 130 residues: Small ribosomal subunit protein uS11 (130 aa).

The protein belongs to the universal ribosomal protein uS11 family. As to quaternary structure, part of the 30S ribosomal subunit. Interacts with proteins S7 and S18. Binds to IF-3.

Its function is as follows. Located on the platform of the 30S subunit, it bridges several disparate RNA helices of the 16S rRNA. Forms part of the Shine-Dalgarno cleft in the 70S ribosome. The sequence is that of Small ribosomal subunit protein uS11 from Buchnera aphidicola subsp. Schizaphis graminum (strain Sg).